The chain runs to 241 residues: ATP synthase subunit a (241 aa).

7 consecutive transmembrane segments (helical) span residues 27-47, 52-72, 87-107, 112-132, 142-162, 175-195, and 198-218; these read NCSL…CWAL, VVPG…ANTL, VMTT…PFGF, HLSV…VIGF, IFLP…IKLF, LAAN…FVLK, and LVLA…EIFV.

This sequence belongs to the ATPase A chain family. F-type ATPases have 2 components, CF(1) - the catalytic core - and CF(0) - the membrane proton channel. CF(1) has five subunits: alpha(3), beta(3), gamma(1), delta(1), epsilon(1). CF(0) has three main subunits: a(1), b(2) and c(9-12). The alpha and beta chains form an alternating ring which encloses part of the gamma chain. CF(1) is attached to CF(0) by a central stalk formed by the gamma and epsilon chains, while a peripheral stalk is formed by the delta and b chains.

It is found in the cell inner membrane. Functionally, key component of the proton channel; it plays a direct role in the translocation of protons across the membrane. This Anaplasma marginale (strain St. Maries) protein is ATP synthase subunit a.